The primary structure comprises 445 residues: Neuropeptide Y receptor type 5 (445 aa).

Residues 1–42 (MEFKLEEHFNKTFVTENNTAAARNAAFPAWEDYRGSVDDLQY) lie on the Extracellular side of the membrane. 2 N-linked (GlcNAc...) asparagine glycosylation sites follow: N10 and N17. Residues 43–63 (FLIGLYTFVSLLGFMGNLLIL) form a helical membrane-spanning segment. Over 64 to 77 (MAVMKKRNQKTTVN) the chain is Cytoplasmic. A helical transmembrane segment spans residues 78-98 (FLIGNLAFSDILVVLFCSPFT). Residues 99 to 117 (LTSVLLDQWMFGKAMCHIM) are Extracellular-facing. C114 and C198 are joined by a disulfide. Residues 118–138 (PFLQCVSVLVSTLILISIAIV) traverse the membrane as a helical segment. Residues 139–156 (RYHMIKHPISNNLTANHG) are Cytoplasmic-facing. A helical membrane pass occupies residues 157 to 177 (YFLIATVWTLGFAICSPLPVF). Over 178–208 (HSLVELKETFGSALLSSKYLCVESWPSDSYR) the chain is Extracellular. The chain crosses the membrane as a helical span at residues 209–229 (IAFTISLLLVQYILPLVCLTV). Residues 230 to 368 (SHTSVCRSIS…KKRSRSVFYR (139 aa)) lie on the Cytoplasmic side of the membrane. The chain crosses the membrane as a helical span at residues 369–389 (LTILILVFAVSWMPLHVFHVV). Topologically, residues 390–406 (TDFNDNLISNRHFKLVY) are extracellular. A helical membrane pass occupies residues 407-427 (CICHLLGMMSCCLNPILYGFL). Residues 428-445 (NNGIKADLRALIHCLHMS) are Cytoplasmic-facing. C441 is lipidated: S-palmitoyl cysteine.

Belongs to the G-protein coupled receptor 1 family. In terms of tissue distribution, brain; hypothalamus.

Its subcellular location is the cell membrane. Receptor for neuropeptide Y and peptide YY. The activity of this receptor is mediated by G proteins that inhibit adenylate cyclase activity. Seems to be associated with food intake. Could be involved in feeding disorders. This chain is Neuropeptide Y receptor type 5 (Npy5r), found in Rattus norvegicus (Rat).